The chain runs to 507 residues: MEELQGYLEMDGFRQQYFLYPFLFQEYIYALAHGHALNGSILYEPVENLDHDNKSSSLIVKRLITRMHQQNRLIISVNDSNQNRFVGHNNHFDSQMISEGFAVVVEIPFSLRLVSSLEEKEIAKSHNLRSIHSIFPFFEDKLSHLNHVSDILIPHPIHLEILVQTLHSWIQDTPSLHLLRFSLYEYWNSNSLITPKNSISLFSKENQRFFLFLSNSHVYECEFIFIFLRKQPFHLRSKSFGSFLERTHFYAKIEYLVVVLCNDFQKTLWLFKDPFMHYVRYQGKSILASRGARLLIKKWKSHLVNFWQCHFDLWSQPARIHIKQLYNHPFYFLGYLSSVRLNSSVIRSQMLENSFRIDTAIKKFETVVPIIPLIGSLAKAKFCNVSGHPISKPFRADLSDSEILNRFGRICRNLSHYHSGSSKKQSLYRIKYILRLSCARTLSRKHKSTIRAFLKRLGSEFLEEFFTEEEQALSLIFPTTSSPSHRSHRERIWYLDIIRINDLVSHL.

It belongs to the intron maturase 2 family. MatK subfamily.

It localises to the plastid. Its subcellular location is the chloroplast. Usually encoded in the trnK tRNA gene intron. Probably assists in splicing its own and other chloroplast group II introns. The polypeptide is Maturase K (Umbellularia californica (California bay laurel)).